The sequence spans 510 residues: UDP-N-acetylmuramyl-tripeptide synthetase (510 aa).

Residue Ser36 participates in UDP-N-acetyl-alpha-D-muramoyl-L-alanyl-D-glutamate binding. Residue 113 to 119 (GTKGKTT) participates in ATP binding. UDP-N-acetyl-alpha-D-muramoyl-L-alanyl-D-glutamate contacts are provided by residues 159 to 160 (TT), Ser186, and Arg194. The residue at position 228 (Lys228) is an N6-carboxylysine.

Belongs to the MurCDEF family. MurE subfamily. In terms of processing, carboxylation is probably crucial for Mg(2+) binding and, consequently, for the gamma-phosphate positioning of ATP.

It is found in the cytoplasm. It functions in the pathway cell wall biogenesis; peptidoglycan biosynthesis. In terms of biological role, catalyzes the addition of an amino acid to the nucleotide precursor UDP-N-acetylmuramoyl-L-alanyl-D-glutamate (UMAG) in the biosynthesis of bacterial cell-wall peptidoglycan. The chain is UDP-N-acetylmuramyl-tripeptide synthetase from Ligilactobacillus salivarius (strain UCC118) (Lactobacillus salivarius).